Here is a 1382-residue protein sequence, read N- to C-terminus: DNA-directed RNA polymerase subunit beta'' (1382 aa).

Residues Cys224, Cys294, Cys301, and Cys304 each coordinate Zn(2+).

The protein belongs to the RNA polymerase beta' chain family. RpoC2 subfamily. In plastids the minimal PEP RNA polymerase catalytic core is composed of four subunits: alpha, beta, beta', and beta''. When a (nuclear-encoded) sigma factor is associated with the core the holoenzyme is formed, which can initiate transcription. The cofactor is Zn(2+).

The protein localises to the plastid. It is found in the chloroplast. The catalysed reaction is RNA(n) + a ribonucleoside 5'-triphosphate = RNA(n+1) + diphosphate. Its function is as follows. DNA-dependent RNA polymerase catalyzes the transcription of DNA into RNA using the four ribonucleoside triphosphates as substrates. The protein is DNA-directed RNA polymerase subunit beta'' of Liriodendron tulipifera (Tuliptree).